The following is a 114-amino-acid chain: Somatostatin-1A (114 aa).

The N-terminal stretch at 1 to 24 is a signal peptide; the sequence is MLSTRIQCALALLSLALAVCSVSA. Positions 25–88 are excised as a propeptide; sequence APTDAKLRQL…KDEVRLELER (64 aa). A disulfide bond links Cys-103 and Cys-114.

This sequence belongs to the somatostatin family.

Its subcellular location is the secreted. Its function is as follows. Somatostatin inhibits the release of somatotropin. This is Somatostatin-1A (sst1a) from Carassius auratus (Goldfish).